The chain runs to 346 residues: tRNA N6-adenosine threonylcarbamoyltransferase (346 aa).

Fe cation-binding residues include His111 and His115. Residues 134–138, Asp167, Gly180, and Asn277 each bind substrate; that span reads LVSGG. Residue Asp305 coordinates Fe cation.

This sequence belongs to the KAE1 / TsaD family. Fe(2+) is required as a cofactor.

The protein resides in the cytoplasm. The catalysed reaction is L-threonylcarbamoyladenylate + adenosine(37) in tRNA = N(6)-L-threonylcarbamoyladenosine(37) in tRNA + AMP + H(+). In terms of biological role, required for the formation of a threonylcarbamoyl group on adenosine at position 37 (t(6)A37) in tRNAs that read codons beginning with adenine. Is involved in the transfer of the threonylcarbamoyl moiety of threonylcarbamoyl-AMP (TC-AMP) to the N6 group of A37, together with TsaE and TsaB. TsaD likely plays a direct catalytic role in this reaction. This is tRNA N6-adenosine threonylcarbamoyltransferase from Bordetella bronchiseptica (strain ATCC BAA-588 / NCTC 13252 / RB50) (Alcaligenes bronchisepticus).